The following is a 283-amino-acid chain: Large ribosomal subunit protein uL2 (283 aa).

The tract at residues 215–283 (RHKGIRPTVR…IRGRKKRINN (69 aa)) is disordered. Over residues 274–283 (IRGRKKRINN) the composition is skewed to basic residues.

It belongs to the universal ribosomal protein uL2 family. In terms of assembly, part of the 50S ribosomal subunit. Forms a bridge to the 30S subunit in the 70S ribosome.

One of the primary rRNA binding proteins. Required for association of the 30S and 50S subunits to form the 70S ribosome, for tRNA binding and peptide bond formation. It has been suggested to have peptidyltransferase activity; this is somewhat controversial. Makes several contacts with the 16S rRNA in the 70S ribosome. In Mycoplasma mobile (strain ATCC 43663 / 163K / NCTC 11711) (Mesomycoplasma mobile), this protein is Large ribosomal subunit protein uL2.